The chain runs to 130 residues: Ribonuclease P protein component 2 (130 aa).

It belongs to the eukaryotic/archaeal RNase P protein component 2 family. In terms of assembly, consists of a catalytic RNA component and at least 5 protein subunits.

It is found in the cytoplasm. The catalysed reaction is Endonucleolytic cleavage of RNA, removing 5'-extranucleotides from tRNA precursor.. Functionally, part of ribonuclease P, a protein complex that generates mature tRNA molecules by cleaving their 5'-ends. The sequence is that of Ribonuclease P protein component 2 from Methanococcus maripaludis (strain DSM 14266 / JCM 13030 / NBRC 101832 / S2 / LL).